We begin with the raw amino-acid sequence, 45 residues long: Caltrin-like protein 1 (45 aa).

Residues 8–45 enclose the Kazal-like domain; sequence DSDRPNCSRYVQHLYMCTKELDPVCGTDGHTYGNRSIF. Asn-13 and Asn-41 each carry an N-linked (GlcNAc...) asparagine glycan.

In terms of processing, glycosylated.

The protein resides in the secreted. In terms of biological role, inhibits calcium transport into spermatozoa. This is Caltrin-like protein 1 from Cavia porcellus (Guinea pig).